A 281-amino-acid chain; its full sequence is Pantothenate synthetase (281 aa).

30–37 lines the ATP pocket; it reads MGNLHQGH. His37 (proton donor) is an active-site residue. Residue Gln61 participates in (R)-pantoate binding. A beta-alanine-binding site is contributed by Gln61. 149–152 lines the ATP pocket; the sequence is GNKD. Gln155 serves as a coordination point for (R)-pantoate. ATP contacts are provided by residues Ile178 and 186–189; that span reads MSSR.

Belongs to the pantothenate synthetase family. As to quaternary structure, homodimer.

The protein localises to the cytoplasm. It carries out the reaction (R)-pantoate + beta-alanine + ATP = (R)-pantothenate + AMP + diphosphate + H(+). Its pathway is cofactor biosynthesis; (R)-pantothenate biosynthesis; (R)-pantothenate from (R)-pantoate and beta-alanine: step 1/1. Catalyzes the condensation of pantoate with beta-alanine in an ATP-dependent reaction via a pantoyl-adenylate intermediate. This is Pantothenate synthetase from Shewanella oneidensis (strain ATCC 700550 / JCM 31522 / CIP 106686 / LMG 19005 / NCIMB 14063 / MR-1).